We begin with the raw amino-acid sequence, 361 residues long: Isocitrate dehydrogenase [NAD] subunit 1, mitochondrial (361 aa).

The N-terminal 12 residues, 1–12 (MLRQGIAAQKKS), are a transit peptide targeting the mitochondrion. The substrate site is built by arginine 110, arginine 141, and aspartate 229. Position 229 (aspartate 229) interacts with Mg(2+).

Belongs to the isocitrate and isopropylmalate dehydrogenases family. As to quaternary structure, octamer of two non-identical subunits IDH1 and IDH2. It depends on Mg(2+) as a cofactor. Mn(2+) is required as a cofactor.

It localises to the mitochondrion. It carries out the reaction D-threo-isocitrate + NAD(+) = 2-oxoglutarate + CO2 + NADH. Functionally, performs an essential role in the oxidative function of the citric acid cycle. The chain is Isocitrate dehydrogenase [NAD] subunit 1, mitochondrial (IDH1) from Kluyveromyces lactis (strain ATCC 8585 / CBS 2359 / DSM 70799 / NBRC 1267 / NRRL Y-1140 / WM37) (Yeast).